Reading from the N-terminus, the 838-residue chain is Ribonucleoside-diphosphate reductase large subunit (838 aa).

Residues 6–97 form the ATP-cone domain; the sequence is KLVTKRDGSV…VTALHKTTTE (92 aa). ATP-binding positions include 10 to 11, 16 to 22, threonine 58, and aspartate 62; these read KR and EPYDEKV. GDP is bound at residue serine 227. A disulfide bridge connects residues cysteine 228 and cysteine 454. Residues 236-238, lysine 253, arginine 266, and 273-274 contribute to the dTTP site; these read DSI and AG. Asparagine 437 provides a ligand contact to GDP. Catalysis depends on asparagine 437, which acts as the Proton acceptor. Cysteine 439 (cysteine radical intermediate) is an active-site residue. GDP-binding positions include glutamate 441 and 626–629; that span reads TAST. Glutamate 441 (proton acceptor) is an active-site residue. Basic and acidic residues predominate over residues 780–794; the sequence is KELPKPDKQSKEEVH. Residues 780-838 are disordered; it reads KELPKPDKQSKEEVHGSVGRGKRKRVGEKPTANHSNAGAPNLNGPPDTDGDGGCLNCGS.

This sequence belongs to the ribonucleoside diphosphate reductase large chain family. Heterodimer of a large and a small subunit.

It carries out the reaction a 2'-deoxyribonucleoside 5'-diphosphate + [thioredoxin]-disulfide + H2O = a ribonucleoside 5'-diphosphate + [thioredoxin]-dithiol. It catalyses the reaction dCDP + [thioredoxin]-disulfide + H2O = CDP + [thioredoxin]-dithiol. Under complex allosteric control mediated by deoxynucleoside triphosphates and ATP binding to separate specificity and activation sites on the large subunit. The type of nucleotide bound at the specificity site determines substrate preference. It seems probable that ATP makes the enzyme reduce CDP and UDP, dGTP favors ADP reduction and dTTP favors GDP reduction. Stimulated by ATP and inhibited by dATP binding to the activity site. Provides the precursors necessary for DNA synthesis. Catalyzes the rate limiting step in the de novo synthesis of deoxyribonucleotides by directly reducing ribonucleotides to the corresponding deoxyribonucleotides. This is Ribonucleoside-diphosphate reductase large subunit (RNR1) from Trypanosoma brucei brucei.